The chain runs to 437 residues: UDP-N-acetylmuramate--L-alanine ligase (437 aa).

Gly-108–Ser-114 is an ATP binding site.

Belongs to the MurCDEF family.

The protein resides in the cytoplasm. It carries out the reaction UDP-N-acetyl-alpha-D-muramate + L-alanine + ATP = UDP-N-acetyl-alpha-D-muramoyl-L-alanine + ADP + phosphate + H(+). It participates in cell wall biogenesis; peptidoglycan biosynthesis. Cell wall formation. This is UDP-N-acetylmuramate--L-alanine ligase from Staphylococcus aureus (strain JH9).